The chain runs to 399 residues: Probable protein phosphatase 2C 28 (399 aa).

Positions 48–356 (EFSMAVVQAN…DDITVIVVFL (309 aa)) constitute a PPM-type phosphatase domain. The Mn(2+) site is built by Asp87, Gly88, Asp288, and Asp347.

Belongs to the PP2C family. Mg(2+) is required as a cofactor. Mn(2+) serves as cofactor.

The catalysed reaction is O-phospho-L-seryl-[protein] + H2O = L-seryl-[protein] + phosphate. It carries out the reaction O-phospho-L-threonyl-[protein] + H2O = L-threonyl-[protein] + phosphate. The protein is Probable protein phosphatase 2C 28 of Oryza sativa subsp. japonica (Rice).